The primary structure comprises 108 residues: Ig kappa chain V-V region MOPC 173 (108 aa).

Residues 1-23 are framework-1; sequence DIQMTQTTSSLSASLGDRVTISC. The cysteines at positions 23 and 88 are disulfide-linked. Residues 24–34 are complementarity-determining-1; that stretch reads SASQSIGNYLB. The segment at 35–49 is framework-2; the sequence is WYQQKPDGTVKLLIY. Positions 50-56 are complementarity-determining-2; sequence YTSSLHS. Residues 57–88 are framework-3; it reads GVPSRFSGSGSGTDYSLTISBLZPZBIATYYC. The segment at 89–97 is complementarity-determining-3; sequence QQYSKLPRT. Positions 98–108 are framework-4; it reads FGGGTKLEIKR.

This chain is Ig kappa chain V-V region MOPC 173, found in Mus musculus (Mouse).